We begin with the raw amino-acid sequence, 621 residues long: Replication factor A protein 1 (621 aa).

At S2 the chain carries N-acetylserine. Phosphoserine; by ATM or ATR is present on S178. The segment at residues 197 to 284 (WTIKARVSYK…PYELNLDRDT (88 aa)) is a DNA-binding region (OB). A C4-type zinc finger spans residues 486-508 (CSNENCNKKVLEQPDGTWRCEKC).

This sequence belongs to the replication factor A protein 1 family. Component of the heterotrimeric canonical replication protein A complex (RPA). Interacts with POB3. Post-translationally, the N-terminus is blocked.

It localises to the nucleus. Its function is as follows. As part of the replication protein A (RPA/RP-A), a single-stranded DNA-binding heterotrimeric complex, may play an essential role in DNA replication, recombination and repair. Binds and stabilizes single-stranded DNA intermediates, preventing complementary DNA reannealing and recruiting different proteins involved in DNA metabolism. Binds to single-stranded sequences participating in DNA replication in addition to those mediating transcriptional repression (URS1) and activation (CAR1). Stimulates the activity of a cognate strand exchange protein (SEP1). It cooperates with T-AG and DNA topoisomerase I to unwind template DNA containing the simian virus 40 origin of DNA replication. This is Replication factor A protein 1 (RFA1) from Saccharomyces cerevisiae (strain ATCC 204508 / S288c) (Baker's yeast).